The following is a 751-amino-acid chain: MSMEKPPLASGLARTRSEQLYETVAADIRSPHGSMDANGVPATAPAAVGGGGTLSRKSSRRLMGMSPGRSSGAGTHIRKSRSAQLKLELEEVSSGAALSRASSASLGLSFSFTGFAMPPEEISDSKPFSDDEMIPEDIEAGKKKPKFQAEPTLPIFLKFRDVTYKVVIKKLTSSVEKEILTGISGSVNPGEVLALMGPSGSGKTTLLSLLAGRISQSSTGGSVTYNDKPYSKYLKSKIGFVTQDDVLFPHLTVKETLTYAARLRLPKTLTREQKKQRALDVIQELGLERCQDTMIGGAFVRGVSGGERKRVSIGNEIIINPSLLLLDEPTSGLDSTTALRTILMLHDIAEAGKTVITTIHQPSSRLFHRFDKLILLGRGSLLYFGKSSEALDYFSSIGCSPLIAMNPAEFLLDLANGNINDISVPSELDDRVQVGNSGRETQTGKPSPAAVHEYLVEAYETRVAEQEKKKLLDPVPLDEEAKAKSTRLKRQWGTCWWEQYCILFCRGLKERRHEYFSWLRVTQVLSTAVILGLLWWQSDIRTPMGLQDQAGLLFFIAVFWGFFPVFTAIFAFPQERAMLNKERAADMYRLSAYFLARTTSDLPLDFILPSLFLLVVYFMTGLRISPYPFFLSMLTVFLCIIAAQGLGLAIGAILMDLKKATTLASVTVMTFMLAGGFFVKKVPVFISWIRYLSFNYHTYKLLLKVQYQDFAVSINGMRIDNGLTEVAALVVMIFGYRLLAYLSLRQMKIVT.

The segment at Ala26 to Arg81 is disordered. Positions Leu157–Ile403 constitute an ABC transporter domain. Gly197–Thr204 is a binding site for ATP. The 210-residue stretch at Glu498–Tyr707 folds into the ABC transmembrane type-2 domain. 6 consecutive transmembrane segments (helical) span residues Phe516–Trp536, Leu552–Phe572, Leu602–Leu622, Leu634–Leu654, Val666–Ile686, and Gly722–Leu742.

It belongs to the ABC transporter superfamily. ABCG family. Eye pigment precursor importer (TC 3.A.1.204) subfamily.

It is found in the membrane. The sequence is that of ABC transporter G family member 22 (ABCG22) from Arabidopsis thaliana (Mouse-ear cress).